A 217-amino-acid chain; its full sequence is Meiotically up-regulated gene 37 protein (217 aa).

Has a role in meiosis. The polypeptide is Meiotically up-regulated gene 37 protein (mug37) (Schizosaccharomyces pombe (strain 972 / ATCC 24843) (Fission yeast)).